The sequence spans 461 residues: Fumarate hydratase class II (461 aa).

Residues 97 to 99 (SGT), 127 to 130 (HPND), 137 to 139 (SSN), and T185 contribute to the substrate site. The active-site Proton donor/acceptor is the H186. S316 is a catalytic residue. Substrate-binding positions include S317 and 322–324 (KVN).

The protein belongs to the class-II fumarase/aspartase family. Fumarase subfamily. In terms of assembly, homotetramer.

It is found in the cytoplasm. The enzyme catalyses (S)-malate = fumarate + H2O. It participates in carbohydrate metabolism; tricarboxylic acid cycle; (S)-malate from fumarate: step 1/1. Its function is as follows. Involved in the TCA cycle. Catalyzes the stereospecific interconversion of fumarate to L-malate. The polypeptide is Fumarate hydratase class II (Staphylococcus aureus (strain MSSA476)).